The chain runs to 259 residues: Global transcriptional regulator CodY (259 aa).

Positions 1–155 (MNLLEKTRQL…SATVVGMEIL (155 aa)) are GAF domain. The H-T-H motif DNA-binding region spans 203–222 (ASKIADRVGITRSVIVNALR).

Belongs to the CodY family.

The protein resides in the cytoplasm. DNA-binding global transcriptional regulator which is involved in the adaptive response to starvation and acts by directly or indirectly controlling the expression of numerous genes in response to nutrient availability. During rapid exponential growth, CodY is highly active and represses genes whose products allow adaptation to nutrient depletion. This Exiguobacterium sp. (strain ATCC BAA-1283 / AT1b) protein is Global transcriptional regulator CodY.